Consider the following 374-residue polypeptide: Gustatory receptor 23a (374 aa).

Over 1–6 (MFPPTR) the chain is Cytoplasmic. Residues 7–27 (VQASSRVVLKIFHFILVAFSL) form a helical membrane-spanning segment. Over 28 to 36 (RSRRLSRLV) the chain is Extracellular. Residues 37–57 (LWLQFLGWLTWFISMWTQSVI) traverse the membrane as a helical segment. At 58-72 (YAQTIDCTLDCSLRH) the chain is on the cytoplasmic side. A helical transmembrane segment spans residues 73–93 (ILTFFQTVSHAFIVVTSFLDG). The Extracellular segment spans residues 94–112 (FRIKQDQLDEPIAFEDSDP). Residues 113 to 133 (WLAFTVLAMLVPTLGVEYLVC) form a helical membrane-spanning segment. Residues 134–226 (SNAPEYAFRI…YNDLHYLFVR (93 aa)) lie on the Cytoplasmic side of the membrane. The helical transmembrane segment at 227-247 (INGYFGGSLLTIIIVHFAIFV) threads the bilayer. Topologically, residues 248–263 (SNSYWLFVDIRTRPWR) are extracellular. The helical transmembrane segment at 264 to 284 (IYAILLNLGFIFNVALQMAAA) threads the bilayer. At 285 to 343 (CWHCQQSYNLGRQIGCLISKLVKPQGSKLYNDLVSEFSLQTLHQRFVVTAKDFFSLNLH) the chain is on the cytoplasmic side. A helical transmembrane segment spans residues 344 to 364 (LLSSMFAAVVTYLVILIQFMF). Over 365–374 (AERSSTRGSG) the chain is Extracellular.

It belongs to the insect chemoreceptor superfamily. Gustatory receptor (GR) family. Gr2a subfamily. As to expression, expressed in the adult labellar chemosensory neurons and labral sense organ. Expressed in neurons of the dorsal pharyngeal sense organ of larvae.

It is found in the cell membrane. Functionally, probable gustatory receptor which mediates acceptance or avoidance behavior, depending on its substrates. This chain is Gustatory receptor 23a (Gr23a), found in Drosophila melanogaster (Fruit fly).